Here is a 1525-residue protein sequence, read N- to C-terminus: Multidrug resistance protein mrp-7 (1525 aa).

Residues 1-24 (MLSSFCGDGHPFSTGLPNVSICAQ) lie on the Extracellular side of the membrane. The N-linked (GlcNAc...) asparagine glycan is linked to Asn18. Residues 25–45 (HTVLVWVPAAFFLLTLPFLSA) form a helical membrane-spanning segment. Residues 46-66 (QCHLTAQRFARLPFSAHFIIK) lie on the Cytoplasmic side of the membrane. Residues 67–87 (LLLVAFLAANSLATWCYVLFS) traverse the membrane as a helical segment. Over 88–94 (KNSYAAA) the chain is Extracellular. The chain crosses the membrane as a helical span at residues 95–115 (YYVYPGLWVLVWTGTFLVHLI). Residues 116 to 118 (RLR) lie on the Cytoplasmic side of the membrane. A helical membrane pass occupies residues 119 to 139 (CGLVSSGIQHVTSLIFLLCGA). The Extracellular segment spans residues 140–165 (PEFYQWIRMENSNSFPNDLTTTDSAQ). Residues 166–186 (FLSIAYLSWYSALILYTFSLC) form a helical membrane-spanning segment. Residues 187–346 (FADPRGAKTD…APFWKGMALS (160 aa)) are Cytoplasmic-facing. Positions 305–587 (LLASTLKFVS…IALLINQAVQ (283 aa)) constitute an ABC transmembrane type-1 1 domain. A helical transmembrane segment spans residues 347–367 (ILMFSVSELRSLILNGYFYIM). Residues 368-434 (FRMGTKIQTS…SCPYQITFAL (67 aa)) lie on the Extracellular side of the membrane. A helical transmembrane segment spans residues 435–455 (VYLFITLGYSALPGVVIMVIF). The Cytoplasmic segment spans residues 456 to 535 (VPMNIISSMI…NILDSFNTAS (80 aa)). The chain crosses the membrane as a helical span at residues 536-556 (PFLVALFSFGTFVLSNPSHLL). The Extracellular segment spans residues 557-561 (TPQIA). A helical membrane pass occupies residues 562–582 (FVSLALFNQLRSPMTMIALLI). Topologically, residues 583 to 953 (NQAVQAVVSN…ATYQLYVKAA (371 aa)) are cytoplasmic. Positions 622 to 849 (VRVENLTASW…RGLFFDFMEE (228 aa)) constitute an ABC transporter 1 domain. 659-666 (GKVGSGKS) is an ATP binding site. The disordered stretch occupies residues 900 to 925 (ELTTQISTMSSPEKPPTGTSPAAATE). Residues 954–974 (GYLLSIAFIGFFIVYMTLQIL) traverse the membrane as a helical segment. The ABC transmembrane type-1 2 domain occupies 959–1245 (IAFIGFFIVY…AVRQVSEIEA (287 aa)). Over 975 to 1005 (RSFWLSAWSDEYDPDSPSAHPMAKGWRLGVY) the chain is Extracellular. A helical membrane pass occupies residues 1006-1026 (GALGFSETACFFVALLALVFV). Topologically, residues 1027-1068 (GQRASKNLHGPLIHNLMRSPMSFYDTTPLGRILNRCAKDIET) are cytoplasmic. A helical membrane pass occupies residues 1069-1089 (IDMMLPMNFRYLVMCVLQVAF). Position 1090 (Thr1090) is a topological domain, extracellular. A helical membrane pass occupies residues 1091–1111 (LIVIIISTPLFAVVILPLALI). Over 1112 to 1184 (YLIFLRYYVP…RYSSLVSNRW (73 aa)) the chain is Cytoplasmic. Residues 1185–1205 (LAVRLEFVGNCIIFFAALFAV) form a helical membrane-spanning segment. The Extracellular segment spans residues 1206–1525 (LSKEFGWITS…ADAAEQDKHE (320 aa)). N-linked (GlcNAc...) asparagine glycosylation is present at Asn1228. Residues 1282–1516 (VKFDGYSTRY…KNSAFAKMVA (235 aa)) form the ABC transporter 2 domain. Position 1316 to 1323 (1316 to 1323 (GRTGAGKS)) interacts with ATP. Residues Asn1358 and Asn1418 are each glycosylated (N-linked (GlcNAc...) asparagine).

This sequence belongs to the ABC transporter superfamily. ABCC family. Conjugate transporter (TC 3.A.1.208) subfamily. Expressed in head neurons, including the dopamine (DA) motor neuron, and other cells in the body.

It localises to the cell membrane. In terms of biological role, negatively regulates cellular toxicity by mediating the export of environmental toxicants such as methylmercury out of the cell. Plays a role in inhibiting methylmercury-induced dopamine (DA) motor neuron degeneration. Not involved in Mn(2+)- or Al(3+)-associated toxicity. The polypeptide is Multidrug resistance protein mrp-7 (Caenorhabditis elegans).